Consider the following 563-residue polypeptide: Coiled-coil domain-containing protein 38 (563 aa).

Residues 128-211 (TKKKTIKRFE…SIKSDIAKTE (84 aa)) are a coiled coil. The tract at residues 265–310 (DNSIDSDKMSVSEEWSSRRGSQGGRHGKHTLGQDSRKSSGFTRPES) is disordered. A compositionally biased stretch (basic and acidic residues) spans 269-281 (DSDKMSVSEEWSS). 2 coiled-coil regions span residues 361 to 415 (QDVD…RSRL) and 454 to 522 (NAVQ…AVAQ). Residues 543–563 (QELLLVSDTRSKSQDEEYFFS) form a disordered region.

Interacts with CCDC42, CFAP53, IFT88 and ODF2. Interacts with CCDC146. Interacts with TEKT3. Interacts with ubiquitinated histone H2A. Expressed exclusively in testis where it is detected mainly in spermatogonia and spermatocytes (at protein level).

The protein resides in the cytoplasm. It is found in the cytoskeleton. The protein localises to the microtubule organizing center. It localises to the centrosome. Its subcellular location is the perinuclear region. The protein resides in the cell projection. It is found in the cilium. The protein localises to the flagellum. In terms of biological role, essential for male fertility. Required for sperm flagellum biogenesis. Also required for acrosome biogenesis. Required for the attachment of developing acrosomes to the nucleus during spermiogenesis and may be involved in the transport of fibrous sheath components. The polypeptide is Coiled-coil domain-containing protein 38 (Ccdc38) (Mus musculus (Mouse)).